A 1616-amino-acid chain; its full sequence is DNA (cytosine-5)-methyltransferase 1 (1616 aa).

The tract at residues 1 to 120 is interaction with DMAP1; that stretch reads MPARTAPARV…NQARSEARRV (120 aa). The interaction with DNMT3A stretch occupies residues 1–148; sequence MPARTAPARV…RRSKSDGEAK (148 aa). Interaction with the PRC2/EED-EZH2 complex regions lie at residues 1 to 336 and 308 to 606; these read MPAR…TEKK and NPQI…TIRH. The 94-residue stretch at 16–109 folds into the DMAP1-binding domain; it reads PAISLPDDVR…NREVNGRLEN (94 aa). Position 70 is an N6,N6-dimethyllysine (lysine 70). The interval 103–349 is disordered; sequence VNGRLENGNQ…AKTVMNSKTH (247 aa). Serine 127 and serine 133 each carry phosphoserine. Threonine 137 carries the phosphothreonine modification. A Phosphoserine modification is found at serine 141. An N6-methyllysine; by SETD7 modification is found at lysine 142. Position 143 is a phosphoserine; by PKB/AKT1 (serine 143). Residues 149–217 are interaction with DNMT3B; sequence PEPSPSPRIT…TSRERVARPL (69 aa). A phosphoserine mark is found at serine 152 and serine 154. Lysine 160 carries the N6-acetyllysine modification. The tract at residues 163–174 is interaction with PCNA; that stretch reads RQTTITSHFAKG. The residue at position 166 (threonine 166) is a Phosphothreonine. Lysine 173 and lysine 188 each carry N6-acetyllysine. A Nuclear localization signal motif is present at residues 177 to 205; it reads KRKPQEESERAKSDESIKEEDKDQDEKRR. 3 stretches are compositionally biased toward basic and acidic residues: residues 179–214, 221–267, and 281–306; these read KPQE…ERVA, EPER…REAR, and KDEK…EPEK. Lysine 259 carries the N6-acetyllysine; alternate modification. A Glycyl lysine isopeptide (Lys-Gly) (interchain with G-Cter in SUMO2); alternate cross-link involves residue lysine 259. The segment at 310-502 is homodimerization; it reads QISDEKDEDE…PEYAPIFGLM (193 aa). A Phosphoserine modification is found at serine 312. Over residues 321–337 the composition is skewed to basic and acidic residues; it reads EEKRRKTTPKEPTEKKM. Residues 331 to 550 are DNA replication foci-targeting sequence; the sequence is EPTEKKMARA…NLNRFTEDSL (220 aa). Zn(2+) contacts are provided by cysteine 353 and cysteine 356. Lysine 366 is modified (N6-acetyllysine). Serine 394 and serine 398 each carry phosphoserine. Residues cysteine 414 and histidine 418 each contribute to the Zn(2+) site. Phosphoserine is present on residues serine 509 and serine 549. Residues 646–692 form a CXXC-type zinc finger; that stretch reads NAFKRRRCGVCEVCQQPECGKCKACKDMVKFGGSGRSKQACQERRCP. The tract at residues 651–697 is required for activity; it reads RRCGVCEVCQQPECGKCKACKDMVKFGGSGRSKQACQERRCPNMAMK. Zn(2+) is bound by residues cysteine 653, cysteine 656, cysteine 659, cysteine 664, cysteine 667, cysteine 670, cysteine 686, and cysteine 691. Positions 693-754 are autoinhibitory linker; sequence NMAMKEADDD…SYYKKVCIDA (62 aa). The span at 699 to 709 shows a compositional bias: acidic residues; sequence ADDDEEVDDNI. A disordered region spans residues 699–729; that stretch reads ADDDEEVDDNIPEMPSPKKMHQGKKKKQNKN. Serine 714 carries the phosphoserine modification. The span at 716 to 728 shows a compositional bias: basic residues; it reads KKMHQGKKKKQNK. Phosphoserine is present on serine 732. At lysine 749 the chain carries N6-acetyllysine. Residues 755-880 enclose the BAH 1 domain; that stretch reads ETLEVGDCVS…QDYARFESPP (126 aa). Serine 878 is subject to Phosphoserine. N6-acetyllysine is present on residues lysine 891, lysine 957, lysine 961, lysine 975, and lysine 1054. The BAH 2 domain occupies 972–1100; sequence HYRKYSDYIK…AKSKSFEDPP (129 aa). The disordered stretch occupies residues 1095–1130; the sequence is SFEDPPNHARSPGNKGKGKGKGKGKPKSQACEPSEP. A run of 5 repeats spans residues 1109 to 1110, 1111 to 1112, 1113 to 1114, 1115 to 1116, and 1117 to 1118. A 6 X 2 AA tandem repeats of K-G region spans residues 1109–1120; it reads KGKGKGKGKGKP. Residues 1110 to 1120 show a composition bias toward basic residues; sequence GKGKGKGKGKP. Lysine 1111, lysine 1113, and lysine 1115 each carry N6-acetyllysine. Lysine 1117 is subject to N6-acetyllysine; by EHMT2. N6-acetyllysine occurs at positions 1119 and 1121. A 6; approximate repeat occupies 1119-1120; the sequence is KP. The segment at 1121 to 1616 is interaction with the PRC2/EED-EZH2 complex; sequence KSQACEPSEP…KIKEEEAAKD (496 aa). Positions 1139–1599 constitute an SAM-dependent MTase C5-type domain; it reads LRTLDVFSGC…LEIKLCMLAK (461 aa). The interval 1139–1616 is catalytic; the sequence is LRTLDVFSGC…KIKEEEAAKD (478 aa). Residues serine 1146, 1150-1151, 1168-1169, 1190-1191, and cysteine 1191 each bind S-adenosyl-L-methionine; these read GL, EM, and DC. Residue cysteine 1226 is part of the active site. N6-acetyllysine is present on residues lysine 1349 and lysine 1415. S-adenosyl-L-methionine is bound by residues asparagine 1578 and valine 1580. Lysine 1609 participates in a covalent cross-link: Glycyl lysine isopeptide (Lys-Gly) (interchain with G-Cter in SUMO2).

The protein belongs to the class I-like SAM-binding methyltransferase superfamily. C5-methyltransferase family. In terms of assembly, homodimer. Forms a stable complex with E2F1, BB1 and HDAC1. Forms a complex with DMAP1 and HDAC2, with direct interaction. Interacts with the PRC2/EED-EZH2 complex. Probably part of a corepressor complex containing ZNF304, TRIM28, SETDB1 and DNMT1. Interacts with UHRF1; promoting its recruitment to hemimethylated DNA. Interacts with USP7, promoting its deubiquitination. Interacts with PCNA. Interacts with MBD2 and MBD3. Interacts with DNMT3A and DNMT3B. Interacts with UBC9. Interacts with CSNK1D. Interacts with HDAC1. Interacts with BAZ2A/TIP5. Interacts with SIRT7. Interacts with ZNF263; recruited to the SIX3 promoter along with other proteins involved in chromatin modification and transcriptional corepression where it contributes to transcriptional repression. Interacts with L3MBTL3 and DCAF5; the interaction requires DNMT1 methylation at Lys-142 and is necessary to target DNMT1 for ubiquitination by the CRL4-DCAF5 E3 ubiquitin ligase complex and proteasomal degradation. Interacts with PHF20L1; the interaction requires DNMT1 methylation at Lys-142 and protects DNMT1 from ubiquitination and proteasomal degradation. Post-translationally, sumoylated; sumoylation increases activity. In terms of processing, acetylation on multiple lysines, mainly by KAT2B/PCAF, regulates cell cycle G(2)/M transition. Deacetylation of Lys-1349 and Lys-1415 by SIRT1 increases methyltransferase activity. Phosphorylation of Ser-154 by CDKs is important for enzymatic activity and protein stability. Phosphorylation of Ser-143 by AKT1 prevents methylation by SETD7 thereby increasing DNMT1 stability. Post-translationally, methylation at Lys-142 by SETD7 is necessary for the regulation of DNMT1 proteasomal degradation. In terms of processing, ubiquitinated by UHRF1; interaction with USP7 counteracts ubiquitination by UHRF1 by promoting deubiquitination and preventing degradation by the proteasome. As to expression, ubiquitous; highly expressed in fetal tissues, heart, kidney, placenta, peripheral blood mononuclear cells, and expressed at lower levels in spleen, lung, brain, small intestine, colon, liver, and skeletal muscle. Isoform 2 is less expressed than isoform 1.

It localises to the nucleus. The catalysed reaction is a 2'-deoxycytidine in DNA + S-adenosyl-L-methionine = a 5-methyl-2'-deoxycytidine in DNA + S-adenosyl-L-homocysteine + H(+). Functionally, methylates CpG residues. Preferentially methylates hemimethylated DNA. Associates with DNA replication sites in S phase maintaining the methylation pattern in the newly synthesized strand, that is essential for epigenetic inheritance. Associates with chromatin during G2 and M phases to maintain DNA methylation independently of replication. It is responsible for maintaining methylation patterns established in development. DNA methylation is coordinated with methylation of histones. Mediates transcriptional repression by direct binding to HDAC2. In association with DNMT3B and via the recruitment of CTCFL/BORIS, involved in activation of BAG1 gene expression by modulating dimethylation of promoter histone H3 at H3K4 and H3K9. Probably forms a corepressor complex required for activated KRAS-mediated promoter hypermethylation and transcriptional silencing of tumor suppressor genes (TSGs) or other tumor-related genes in colorectal cancer (CRC) cells. Also required to maintain a transcriptionally repressive state of genes in undifferentiated embryonic stem cells (ESCs). Associates at promoter regions of tumor suppressor genes (TSGs) leading to their gene silencing. Promotes tumor growth. The polypeptide is DNA (cytosine-5)-methyltransferase 1 (DNMT1) (Homo sapiens (Human)).